A 346-amino-acid polypeptide reads, in one-letter code: Annexin A1 (346 aa).

S5 carries the phosphoserine; by TRPM7 modification. An Isoglutamyl lysine isopeptide (Gln-Lys) (interchain with K-?) cross-link involves residue Q19. Y21 is modified (phosphotyrosine; by EGFR). A Phosphoserine; by PKC modification is found at S27. Phosphoserine is present on residues S34 and S37. Annexin repeat units follow at residues 42–113, 114–185, 197–269, and 273–344; these read FDAS…ALLK, TPAQ…SLAK, DLAD…AIVK, and STPA…ALCG. N6-acetyllysine is present on K58. Residues G59, V60, E62, K97, L100, E105, M127, G129, G131, T132, and E134 each contribute to the Ca(2+) site. T136 bears the Phosphothreonine mark. Residues D171, G210, and R213 each coordinate Ca(2+). K214 is covalently cross-linked (Glycyl lysine isopeptide (Lys-Gly) (interchain with G-Cter in SUMO1); alternate). Residue K214 forms a Glycyl lysine isopeptide (Lys-Gly) (interchain with G-Cter in SUMO2); alternate linkage. G215 is a binding site for Ca(2+). N6-acetyllysine is present on K239. D253, E255, and L256 together coordinate Ca(2+). Residue K257 forms a Glycyl lysine isopeptide (Lys-Gly) (interchain with G-Cter in SUMO1) linkage. Ca(2+) contacts are provided by E261, M286, G288, and G290. K312 is subject to N6-acetyllysine. C324 and C343 are oxidised to a cystine. Ca(2+)-binding residues include L328, E330, and T331. K332 participates in a covalent cross-link: Glycyl lysine isopeptide (Lys-Gly) (interchain with G-Cter in SUMO1). E336 is a binding site for Ca(2+).

Belongs to the annexin family. In terms of assembly, homodimer; non-covalently linked. Homodimer; linked by transglutamylation. Homodimers linked by transglutamylation are observed in placenta, but not in other tissues. Interacts with S100A11. Heterotetramer, formed by two molecules each of S100A11 and ANXA1. Interacts with DYSF. Interacts with EGFR. Phosphorylated by protein kinase C, EGFR and TRPM7. Phosphorylated in response to EGF treatment. In terms of processing, sumoylated. Post-translationally, proteolytically cleaved by cathepsin CTSG to release the active N-terminal peptide Ac2-26.

The protein localises to the nucleus. It localises to the cytoplasm. Its subcellular location is the cell projection. It is found in the cilium. The protein resides in the basolateral cell membrane. The protein localises to the lateral cell membrane. It localises to the cell membrane. Its subcellular location is the apical cell membrane. It is found in the membrane. The protein resides in the endosome membrane. The protein localises to the secreted. It localises to the extracellular space. Its subcellular location is the early endosome. It is found in the cytoplasmic vesicle membrane. The protein resides in the extracellular exosome. The protein localises to the cytoplasmic vesicle. It localises to the secretory vesicle lumen. Its subcellular location is the phagocytic cup. Its function is as follows. Plays important roles in the innate immune response as effector of glucocorticoid-mediated responses and regulator of the inflammatory process. Has anti-inflammatory activity. Plays a role in glucocorticoid-mediated down-regulation of the early phase of the inflammatory response. Contributes to the adaptive immune response by enhancing signaling cascades that are triggered by T-cell activation, regulates differentiation and proliferation of activated T-cells. Promotes the differentiation of T-cells into Th1 cells and negatively regulates differentiation into Th2 cells. Has no effect on unstimulated T-cells. Negatively regulates hormone exocytosis via activation of the formyl peptide receptors and reorganization of the actin cytoskeleton. Has high affinity for Ca(2+) and can bind up to eight Ca(2+) ions. Displays Ca(2+)-dependent binding to phospholipid membranes. Plays a role in the formation of phagocytic cups and phagosomes. Plays a role in phagocytosis by mediating the Ca(2+)-dependent interaction between phagosomes and the actin cytoskeleton. Functions at least in part by activating the formyl peptide receptors and downstream signaling cascades. Promotes chemotaxis of granulocytes and monocytes via activation of the formyl peptide receptors. Promotes rearrangement of the actin cytoskeleton, cell polarization and cell migration. Promotes resolution of inflammation and wound healing. Acts via neutrophil N-formyl peptide receptors to enhance the release of CXCL2. The sequence is that of Annexin A1 (ANXA1) from Cavia cutleri (Guinea pig).